A 255-amino-acid polypeptide reads, in one-letter code: Triosephosphate isomerase (255 aa).

Position 10–12 (10–12 (NWK)) interacts with substrate. The Electrophile role is filled by histidine 96. Glutamate 169 acts as the Proton acceptor in catalysis. Substrate contacts are provided by residues glycine 175, serine 214, and 235 to 236 (GG).

Belongs to the triosephosphate isomerase family. In terms of assembly, homodimer.

The protein localises to the cytoplasm. It catalyses the reaction D-glyceraldehyde 3-phosphate = dihydroxyacetone phosphate. The protein operates within carbohydrate biosynthesis; gluconeogenesis. It functions in the pathway carbohydrate degradation; glycolysis; D-glyceraldehyde 3-phosphate from glycerone phosphate: step 1/1. Functionally, involved in the gluconeogenesis. Catalyzes stereospecifically the conversion of dihydroxyacetone phosphate (DHAP) to D-glyceraldehyde-3-phosphate (G3P). This Coxiella burnetii (strain Dugway 5J108-111) protein is Triosephosphate isomerase.